A 272-amino-acid chain; its full sequence is Ribosomal RNA small subunit methyltransferase A (272 aa).

Residues asparagine 18, leucine 20, glycine 45, glutamate 66, aspartate 91, and asparagine 113 each contribute to the S-adenosyl-L-methionine site.

The protein belongs to the class I-like SAM-binding methyltransferase superfamily. rRNA adenine N(6)-methyltransferase family. RsmA subfamily.

The protein localises to the cytoplasm. The catalysed reaction is adenosine(1518)/adenosine(1519) in 16S rRNA + 4 S-adenosyl-L-methionine = N(6)-dimethyladenosine(1518)/N(6)-dimethyladenosine(1519) in 16S rRNA + 4 S-adenosyl-L-homocysteine + 4 H(+). Functionally, specifically dimethylates two adjacent adenosines (A1518 and A1519) in the loop of a conserved hairpin near the 3'-end of 16S rRNA in the 30S particle. May play a critical role in biogenesis of 30S subunits. This chain is Ribosomal RNA small subunit methyltransferase A, found in Yersinia pseudotuberculosis serotype O:1b (strain IP 31758).